A 712-amino-acid polypeptide reads, in one-letter code: Polyribonucleotide nucleotidyltransferase (712 aa).

2 residues coordinate Mg(2+): Asp-487 and Asp-493. Positions 554–613 (PRIEVMNIPVDKIREVIGSGGKVIREIVEKTGAKINIEDDGTVKIASSSGKEIEAARKWI) constitute a KH domain. One can recognise an S1 motif domain in the interval 623–691 (GQIYEGTVVK…ERGKVRLSMK (69 aa)).

It belongs to the polyribonucleotide nucleotidyltransferase family. It depends on Mg(2+) as a cofactor.

The protein resides in the cytoplasm. The catalysed reaction is RNA(n+1) + phosphate = RNA(n) + a ribonucleoside 5'-diphosphate. Involved in mRNA degradation. Catalyzes the phosphorolysis of single-stranded polyribonucleotides processively in the 3'- to 5'-direction. This chain is Polyribonucleotide nucleotidyltransferase, found in Rhizobium etli (strain CIAT 652).